A 57-amino-acid polypeptide reads, in one-letter code: Large ribosomal subunit protein bL32 (57 aa).

Residues 1 to 20 (MAVQQRRVSKSRKGMRRSHD) are disordered. A compositionally biased stretch (basic residues) spans 7 to 19 (RVSKSRKGMRRSH).

It belongs to the bacterial ribosomal protein bL32 family.

The chain is Large ribosomal subunit protein bL32 from Ureaplasma urealyticum serovar 10 (strain ATCC 33699 / Western).